Consider the following 365-residue polypeptide: tRNA N6-adenosine threonylcarbamoyltransferase (365 aa).

Residues histidine 119 and histidine 123 each contribute to the Fe cation site. Substrate-binding positions include 141 to 145, aspartate 174, glycine 187, and asparagine 289; that span reads LVSGG. Aspartate 317 is a Fe cation binding site. The tract at residues 341–365 is disordered; sequence SARPRWPLDKTSPALIGSGKKGAKA.

Belongs to the KAE1 / TsaD family. Fe(2+) serves as cofactor.

It localises to the cytoplasm. The enzyme catalyses L-threonylcarbamoyladenylate + adenosine(37) in tRNA = N(6)-L-threonylcarbamoyladenosine(37) in tRNA + AMP + H(+). In terms of biological role, required for the formation of a threonylcarbamoyl group on adenosine at position 37 (t(6)A37) in tRNAs that read codons beginning with adenine. Is involved in the transfer of the threonylcarbamoyl moiety of threonylcarbamoyl-AMP (TC-AMP) to the N6 group of A37, together with TsaE and TsaB. TsaD likely plays a direct catalytic role in this reaction. This chain is tRNA N6-adenosine threonylcarbamoyltransferase, found in Ruegeria sp. (strain TM1040) (Silicibacter sp.).